A 357-amino-acid polypeptide reads, in one-letter code: Non-structural protein NS2 (357 aa).

Disordered regions lie at residues 163 to 199 (NERE…AREM) and 228 to 267 (LDEK…PKTH). Composition is skewed to acidic residues over residues 230-241 (EKDEEDGDERED) and 250-260 (DDDEQGEDASD).

This sequence belongs to the orbivirus non-structural protein NS2 family.

Its function is as follows. Single-stranded RNA-binding protein. The chain is Non-structural protein NS2 (Segment-8) from Antilocapra americana (Pronghorn).